The sequence spans 338 residues: Putative peptide import ATP-binding protein BOV_A0348 (338 aa).

An ABC transporter domain is found at 10 to 263 (KGLRTVFRTR…PRHPYTMGLL (254 aa)). ATP is bound at residue 43 to 50 (GESGSGKS).

This sequence belongs to the ABC transporter superfamily. In terms of assembly, the complex is composed of two ATP-binding proteins (BOV_A0347 and BOV_A0348), two transmembrane proteins (BOV_A0350 and BOV_A0351) and a solute-binding protein (BOV_A0352).

It is found in the cell inner membrane. Probably part of an ABC transporter complex that could be involved in peptide import. Probably responsible for energy coupling to the transport system. The polypeptide is Putative peptide import ATP-binding protein BOV_A0348 (Brucella ovis (strain ATCC 25840 / 63/290 / NCTC 10512)).